The sequence spans 385 residues: Glucose-fructose oxidoreductase domain-containing protein 2 (385 aa).

Positions Met-1–Ala-25 are cleaved as a signal peptide.

Belongs to the Gfo/Idh/MocA family.

It localises to the secreted. The protein localises to the extracellular space. It is found in the extracellular matrix. Functionally, promotes matrix assembly. This Homo sapiens (Human) protein is Glucose-fructose oxidoreductase domain-containing protein 2 (GFOD2).